The primary structure comprises 87 residues: Cobalt transport protein CbiN (87 aa).

2 helical membrane-spanning segments follow: residues 4 to 24 and 58 to 78; these read LLLLLILLIFAAKVTAEEWAG and MLFSLQAAIGSLIIGYFLGYY.

This sequence belongs to the CbiN family. In terms of assembly, forms an energy-coupling factor (ECF) transporter complex composed of an ATP-binding protein (A component, CbiO), a transmembrane protein (T component, CbiQ) and 2 possible substrate-capture proteins (S components, CbiM and CbiN) of unknown stoichimetry.

The protein resides in the cell membrane. It functions in the pathway cofactor biosynthesis; adenosylcobalamin biosynthesis. Part of the energy-coupling factor (ECF) transporter complex CbiMNOQ involved in cobalt import. This Archaeoglobus fulgidus (strain ATCC 49558 / DSM 4304 / JCM 9628 / NBRC 100126 / VC-16) protein is Cobalt transport protein CbiN.